The chain runs to 336 residues: Cytoskeleton protein RodZ (336 aa).

Residues 1–111 (MNTEATHDQN…LGKRRKKRDG (111 aa)) lie on the Cytoplasmic side of the membrane. In terms of domain architecture, HTH cro/C1-type spans 19–71 (LRNAREQLGLSQQAVAERLCLKVSTVRDIEEDKAPSDLASTFLRGYIRSYARL). Residues 30-49 (QQAVAERLCLKVSTVRDIEE) constitute a DNA-binding region (H-T-H motif). Residues 112 to 132 (WLMSFTWLVLFVVVGLTGAWW) traverse the membrane as a helical; Signal-anchor for type II membrane protein segment. Over 133–336 (WQNHKAQQEE…TLNAEPTPAQ (204 aa)) the chain is Periplasmic. The interval 155 to 243 (NADKDSGQSV…PSALPTSQAG (89 aa)) is disordered. Positions 161 to 175 (GQSVPLDTGAVTSQD) are enriched in polar residues. Low complexity-rich tracts occupy residues 176-214 (TTPA…VVAP) and 221-243 (TAAT…SQAG).

The protein belongs to the RodZ family.

It localises to the cell inner membrane. In terms of biological role, cytoskeletal protein that is involved in cell-shape control through regulation of the length of the long axis. This is Cytoskeleton protein RodZ from Salmonella newport (strain SL254).